Here is a 651-residue protein sequence, read N- to C-terminus: Intraflagellar transport protein 70A (651 aa).

TPR repeat units lie at residues 8-41, 42-75, 140-173, 175-207, 372-405, 410-443, and 445-478; these read DGEYTATIYKLIKEARYGEAIQILSNELQKQYRS, RAGLSLLGYCYYQIQDFVNAADCYEQLIQITPEV, PESEINMGCLLYKEGHYEEACKKFITAMQVMGYK, DLSYNIALCYYSMKQYAPALKHIADIIERGIRE, LTEQMRKLTKQVQEARHNRDDEAVKKAVNEYDET, IPVLMAQAKIYWNMENYQMVEKIFRKSVEFCNEH, and IWKLNVAHVLFMQDNKYKEAIGFYEPIVKKHYDN. Positions 494 to 521 form a coiled coil; it reads YIMTSQNEEAEELMRKIEKEEEQIAYEN. One copy of the TPR 8 repeat lies at 530–563; sequence CIVNLVIGTLYCAKGNYEFGISRVIKSLEPYNKK.

It belongs to the TTC30/dfy-1/fleer family.

Its subcellular location is the cell projection. The protein localises to the cilium. In terms of biological role, required for polyglutamylation of axonemal tubulin. Plays a role in anterograde intraflagellar transport (IFT), the process by which cilia precursors are transported from the base of the cilium to the site of their incorporation at the tip. This Xenopus tropicalis (Western clawed frog) protein is Intraflagellar transport protein 70A (ift70a).